Here is a 565-residue protein sequence, read N- to C-terminus: NAD-dependent malic enzyme (565 aa).

Y104 (proton donor) is an active-site residue. R157 is an NAD(+) binding site. K175 acts as the Proton acceptor in catalysis. A divalent metal cation-binding residues include E246, D247, and D270. 2 residues coordinate NAD(+): D270 and N418.

Belongs to the malic enzymes family. Homotetramer. Mg(2+) is required as a cofactor. The cofactor is Mn(2+).

The catalysed reaction is (S)-malate + NAD(+) = pyruvate + CO2 + NADH. The enzyme catalyses oxaloacetate + H(+) = pyruvate + CO2. This Escherichia coli O127:H6 (strain E2348/69 / EPEC) protein is NAD-dependent malic enzyme.